Reading from the N-terminus, the 455-residue chain is Beta-1,4-mannosyltransferase bre-3 (455 aa).

It belongs to the glycosyltransferase 2 family.

Its subcellular location is the cytoplasm. It participates in protein modification; protein glycosylation. In terms of biological role, glycosyltransferase with a proposed role in glycosphingolipid biosynthesis. Involved in susceptibility to pore-forming crystal toxins in conjunction with bre-1, bre-2 and bre-4. Involved in resistance to the nematotoxic C.cinerea galectin Cgl2. Has a role in determining brood size. This is Beta-1,4-mannosyltransferase bre-3 from Caenorhabditis briggsae.